An 81-amino-acid chain; its full sequence is Beta-catenin-interacting protein 1 (81 aa).

A Phosphoserine modification is found at S59.

The protein belongs to the CTNNBIP1 family. In terms of assembly, binds CTNNB1. As to expression, highly expressed in heart, brain, liver and skeletal muscle. Detected at low levels in kidney, testis and lung.

The protein localises to the cytoplasm. It localises to the nucleus. In terms of biological role, prevents the interaction between CTNNB1 and TCF family members, and acts as a negative regulator of the Wnt signaling pathway. This chain is Beta-catenin-interacting protein 1 (Ctnnbip1), found in Mus musculus (Mouse).